The chain runs to 668 residues: RING finger protein 214 (668 aa).

Disordered regions lie at residues M1–E87 and N103–R125. A2 carries the N-acetylalanine modification. Phosphoserine occurs at positions 15, 40, 48, and 54. Over residues K43 to K59 the composition is skewed to polar residues. Residues E60–E71 show a composition bias toward basic and acidic residues. S196 is modified (phosphoserine). A coiled-coil region spans residues Q220–T379. Residues F486–V552 are disordered. S497, S511, and S516 each carry phosphoserine. The span at P523–G536 shows a compositional bias: pro residues. An RING-type; atypical zinc finger spans residues C623–P665.

The polypeptide is RING finger protein 214 (Rnf214) (Mus musculus (Mouse)).